The sequence spans 454 residues: Diaminobutyrate--2-oxoglutarate aminotransferase (454 aa).

Residue lysine 287 is modified to N6-(pyridoxal phosphate)lysine.

Belongs to the class-III pyridoxal-phosphate-dependent aminotransferase family. Requires pyridoxal 5'-phosphate as cofactor.

The catalysed reaction is L-2,4-diaminobutanoate + 2-oxoglutarate = L-aspartate 4-semialdehyde + L-glutamate. It participates in amine and polyamine biosynthesis; 1,3-diaminopropane biosynthesis; 1,3-diaminopropane from L-aspartate 4-semialdehyde: step 1/2. The sequence is that of Diaminobutyrate--2-oxoglutarate aminotransferase (dat) from Haemophilus influenzae (strain ATCC 51907 / DSM 11121 / KW20 / Rd).